The chain runs to 852 residues: Nucleolar protein 14 homolog (852 aa).

Residues 1-40 are disordered; it reads MVAKGKKASADAVYAKKTTRSANPFDNSTAQSSKRGNPFD. Positions 20–35 are enriched in polar residues; that stretch reads RSANPFDNSTAQSSKR. Positions 190-221 form a coiled coil; it reads IDEMIVEQKRRKNEIAKEKDEVYDLTEKLDAN. Disordered regions lie at residues 288-324 and 338-410; these read RRMR…GEDD and LGTH…KSAD. A compositionally biased stretch (basic and acidic residues) spans 344-353; it reads GKKEAVLKGD. Acidic residues predominate over residues 354-381; it reads ENEDDDDKEGEEEEEEDSDEESDSEVDN. A coiled-coil region spans residues 774-851; sequence KMSKAKEERA…ELSRAKKKKK (78 aa).

Belongs to the NOP14 family. In terms of assembly, component of the ribosomal small subunit (SSU) processome.

The protein resides in the nucleus. The protein localises to the nucleolus. Functionally, involved in nucleolar processing of pre-18S ribosomal RNA. Has a role in the nuclear export of 40S pre-ribosomal subunit to the cytoplasm. This Drosophila melanogaster (Fruit fly) protein is Nucleolar protein 14 homolog (l(3)07882).